The sequence spans 180 residues: Peroxisome assembly protein 22 (180 aa).

A helical transmembrane segment spans residues leucine 15 to tyrosine 32.

It belongs to the peroxin-22 family.

Its subcellular location is the peroxisome membrane. In terms of biological role, involved in peroxisome biogenesis. The protein is Peroxisome assembly protein 22 (PEX22) of Saccharomyces cerevisiae (strain ATCC 204508 / S288c) (Baker's yeast).